Reading from the N-terminus, the 403-residue chain is Riboflavin biosynthesis protein RibBA (403 aa).

The interval methionine 1 to arginine 204 is DHBP synthase. D-ribulose 5-phosphate is bound by residues arginine 30–glutamate 31, aspartate 35, arginine 143–threonine 147, and glutamate 167. Glutamate 31 contacts Mg(2+). Histidine 146 is a Mg(2+) binding site. Positions threonine 205 to valine 403 are GTP cyclohydrolase II. GTP is bound at residue arginine 255–serine 259. Positions 260, 271, and 273 each coordinate Zn(2+). GTP contacts are provided by residues glutamine 276, glutamate 298–arginine 300, and threonine 320. Aspartate 332 serves as the catalytic Proton acceptor; for GTP cyclohydrolase activity. Catalysis depends on arginine 334, which acts as the Nucleophile; for GTP cyclohydrolase activity. GTP is bound by residues threonine 355 and lysine 360.

It in the N-terminal section; belongs to the DHBP synthase family. The protein in the C-terminal section; belongs to the GTP cyclohydrolase II family. Requires Mg(2+) as cofactor. It depends on Mn(2+) as a cofactor. Zn(2+) is required as a cofactor.

It catalyses the reaction D-ribulose 5-phosphate = (2S)-2-hydroxy-3-oxobutyl phosphate + formate + H(+). The catalysed reaction is GTP + 4 H2O = 2,5-diamino-6-hydroxy-4-(5-phosphoribosylamino)-pyrimidine + formate + 2 phosphate + 3 H(+). It functions in the pathway cofactor biosynthesis; riboflavin biosynthesis; 2-hydroxy-3-oxobutyl phosphate from D-ribulose 5-phosphate: step 1/1. It participates in cofactor biosynthesis; riboflavin biosynthesis; 5-amino-6-(D-ribitylamino)uracil from GTP: step 1/4. Catalyzes the conversion of D-ribulose 5-phosphate to formate and 3,4-dihydroxy-2-butanone 4-phosphate. In terms of biological role, catalyzes the conversion of GTP to 2,5-diamino-6-ribosylamino-4(3H)-pyrimidinone 5'-phosphate (DARP), formate and pyrophosphate. The sequence is that of Riboflavin biosynthesis protein RibBA from Endomicrobium trichonymphae.